Here is a 676-residue protein sequence, read N- to C-terminus: Cysteine-rich receptor-like protein kinase 4 (676 aa).

An N-terminal signal peptide occupies residues Met1–Ala16. Topologically, residues Asp17 to Ser287 are extracellular. 2 Gnk2-homologous domains span residues His31–Ile135 and Ile146–Phe246. N-linked (GlcNAc...) asparagine glycans are attached at residues Asn33, Asn46, Asn64, Asn152, Asn181, Asn243, and Asn248. Residues Thr252 to Ser279 form a disordered region. A glycan (N-linked (GlcNAc...) asparagine) is linked at Asn286. Residues Ser288 to Phe308 traverse the membrane as a helical segment. Topologically, residues Ser309 to Arg676 are cytoplasmic. In terms of domain architecture, Protein kinase spans Phe351 to Leu631. ATP contacts are provided by residues Leu357 to Val365 and Lys379. At Tyr424 the chain carries Phosphotyrosine. Asp476 (proton acceptor) is an active-site residue. A Phosphothreonine modification is found at Thr516. The residue at position 524 (Tyr524) is a Phosphotyrosine.

It belongs to the protein kinase superfamily. Ser/Thr protein kinase family. CRK subfamily.

The protein localises to the membrane. It carries out the reaction L-seryl-[protein] + ATP = O-phospho-L-seryl-[protein] + ADP + H(+). The catalysed reaction is L-threonyl-[protein] + ATP = O-phospho-L-threonyl-[protein] + ADP + H(+). The sequence is that of Cysteine-rich receptor-like protein kinase 4 (CRK4) from Arabidopsis thaliana (Mouse-ear cress).